We begin with the raw amino-acid sequence, 480 residues long: Glycogen synthase (480 aa).

Position 15 (Lys15) interacts with ADP-alpha-D-glucose.

This sequence belongs to the glycosyltransferase 1 family. Bacterial/plant glycogen synthase subfamily.

The enzyme catalyses [(1-&gt;4)-alpha-D-glucosyl](n) + ADP-alpha-D-glucose = [(1-&gt;4)-alpha-D-glucosyl](n+1) + ADP + H(+). It functions in the pathway glycan biosynthesis; glycogen biosynthesis. Its function is as follows. Synthesizes alpha-1,4-glucan chains using ADP-glucose. The sequence is that of Glycogen synthase from Rhizobium leguminosarum bv. trifolii (strain WSM2304).